We begin with the raw amino-acid sequence, 328 residues long: Phenylalanine--tRNA ligase alpha subunit (328 aa).

A Mg(2+)-binding site is contributed by glutamate 245.

The protein belongs to the class-II aminoacyl-tRNA synthetase family. Phe-tRNA synthetase alpha subunit type 1 subfamily. Tetramer of two alpha and two beta subunits. Mg(2+) serves as cofactor.

It is found in the cytoplasm. The catalysed reaction is tRNA(Phe) + L-phenylalanine + ATP = L-phenylalanyl-tRNA(Phe) + AMP + diphosphate + H(+). This is Phenylalanine--tRNA ligase alpha subunit from Helicobacter pylori (strain G27).